The primary structure comprises 89 residues: Rho beta-crystallin (89 aa).

Position 31 (histidine 31) interacts with substrate.

This sequence belongs to the aldo/keto reductase family. As to quaternary structure, monomer.

This is Rho beta-crystallin from Lepidodactylus lugubris (Mourning gecko).